A 587-amino-acid chain; its full sequence is MNFNHHFTWSLVIISQIFQVQAGFGDPREALLEIQQKHGKPCDCAGGYVSSPPTNSLTTVSCSTYTAYSVTNSLKWQCVSTPTTASPTHIGSCPSQCNSQSYDSVHATCYNHYQQCTIGNKTYLTATMIRDKSPSSGDGNVPTILGNNQNLIIAGCPENKKGQVVCWNSQPSVHMSDGGGPQDKVREIIVNKKFEELHKSLFPELSYHPLALPEARGKEKIDAHTFDLLATVHSLLNVSSQRQLAEDCWLCLRSGDPVPLALPYDNTSCSNSTFFFNCSNCSCLITPPFLVQPFNFTHSVCLYADYQNNSFDIDVGLAGFTNCSSYINISKPSSPLCAPNSSVFVCGNNKAYTYLPTNWTGSCVLATLLPDIDIIPGSEPVPIPAIDHFLGRPKRAIQFIPLVIGLGITTAVSTGTAGLGVSLTQYTKLSHQLISDVQAISSTIQDLQDQVDSLAEVVLQNRRGLDLLTAEQGGICLALQEKCCFYANKSGIVRDKIKNLQDDLEKRRKQLIDNPFWTGFHGLLPYVMPLLGPLLCLLLVLSFGPIIFNKLMTFIKHQIESIQAKPIQVHYHRLEQEDHGGSYLNLT.

Positions 1–22 (MNFNHHFTWSLVIISQIFQVQA) are cleaved as a signal peptide. Residues 23–527 (GFGDPREALL…TGFHGLLPYV (505 aa)) lie on the Extracellular side of the membrane. N-linked (GlcNAc...) asparagine; by host glycosylation is found at asparagine 120 and asparagine 237. The short motif at 248-251 (CWLC) is the CXXC element. Disulfide bonds link cysteine 248–cysteine 251, cysteine 248–cysteine 484, and cysteine 476–cysteine 483. Residues asparagine 266, asparagine 271, asparagine 277, asparagine 280, asparagine 295, asparagine 308, asparagine 322, asparagine 328, asparagine 340, and asparagine 358 are each glycosylated (N-linked (GlcNAc...) asparagine; by host). Residues 399–419 (FIPLVIGLGITTAVSTGTAGL) are fusion peptide. Coiled-coil stretches lie at residues 420-470 (GVSL…LLTA) and 480-516 (QEKCCFYANKSGIVRDKIKNLQDDLEKRRKQLIDNPF). An immunosuppression region spans residues 459–475 (LQNRRGLDLLTAEQGGI). The CX6CC motif lies at 476–484 (CLALQEKCC). Asparagine 488 carries N-linked (GlcNAc...) asparagine; by host glycosylation. A helical membrane pass occupies residues 528 to 548 (MPLLGPLLCLLLVLSFGPIIF). At 549–587 (NKLMTFIKHQIESIQAKPIQVHYHRLEQEDHGGSYLNLT) the chain is on the cytoplasmic side. The YXXL motif; contains endocytosis signal motif lies at 571 to 574 (YHRL).

The mature envelope protein (Env) consists of a trimer of SU-TM heterodimers attached by a labile interchain disulfide bond. Post-translationally, specific enzymatic cleavages in vivo yield mature proteins. Envelope glycoproteins are synthesized as an inactive precursor that is N-glycosylated and processed likely by host cell furin or by a furin-like protease in the Golgi to yield the mature SU and TM proteins. The cleavage site between SU and TM requires the minimal sequence [KR]-X-[KR]-R. The R-peptide is released from the C-terminus of the cytoplasmic tail of the TM protein upon particle formation as a result of proteolytic cleavage by the viral protease. Cleavage of this peptide is required for TM to become fusogenic. The CXXC motif is highly conserved across a broad range of retroviral envelope proteins. It is thought to participate in the formation of a labile disulfide bond possibly with the CX6CC motif present in the transmembrane protein. Isomerization of the intersubunit disulfide bond to an SU intrachain disulfide bond is thought to occur upon receptor recognition in order to allow membrane fusion.

The protein localises to the virion membrane. Its subcellular location is the host cell membrane. The surface protein (SU) attaches the virus to the host cell by binding to its receptor. This interaction triggers the refolding of the transmembrane protein (TM) and is thought to activate its fusogenic potential by unmasking its fusion peptide. Fusion occurs at the host cell plasma membrane. Its function is as follows. The transmembrane protein (TM) acts as a class I viral fusion protein. Under the current model, the protein has at least 3 conformational states: pre-fusion native state, pre-hairpin intermediate state, and post-fusion hairpin state. During viral and target cell membrane fusion, the coiled coil regions (heptad repeats) assume a trimer-of-hairpins structure, positioning the fusion peptide in close proximity to the C-terminal region of the ectodomain. The formation of this structure appears to drive apposition and subsequent fusion of viral and target cell membranes. Membranes fusion leads to delivery of the nucleocapsid into the cytoplasm. The sequence is that of Envelope glycoprotein (env) from Simian retrovirus SRV-1.